Here is a 258-residue protein sequence, read N- to C-terminus: tRNA pseudouridine synthase A (258 aa).

The active-site Nucleophile is the Asp-53. Tyr-111 is a binding site for substrate.

The protein belongs to the tRNA pseudouridine synthase TruA family. In terms of assembly, homodimer.

The enzyme catalyses uridine(38/39/40) in tRNA = pseudouridine(38/39/40) in tRNA. Functionally, formation of pseudouridine at positions 38, 39 and 40 in the anticodon stem and loop of transfer RNAs. The chain is tRNA pseudouridine synthase A from Streptococcus agalactiae serotype III (strain NEM316).